The following is a 1101-amino-acid chain: Serine/threonine-protein kinase PSK2 (1101 aa).

Threonine 118 bears the Phosphothreonine mark. Residues 841-1099 enclose the Protein kinase domain; the sequence is FTILQVMGEG…IDEIYEDKWL (259 aa). ATP contacts are provided by residues 847–855 and lysine 870; that span reads MGEGAYGKV. Aspartate 975 functions as the Proton acceptor in the catalytic mechanism.

This sequence belongs to the protein kinase superfamily. Ser/Thr protein kinase family.

The protein resides in the cytoplasm. It carries out the reaction L-seryl-[protein] + ATP = O-phospho-L-seryl-[protein] + ADP + H(+). The catalysed reaction is L-threonyl-[protein] + ATP = O-phospho-L-threonyl-[protein] + ADP + H(+). Its function is as follows. Serine/threonine-protein kinase involved in the control of sugar metabolism and translation. Phosphorylates UGP1, which is required for normal glycogen and beta-(1,6)-glucan synthesis. This phosphorylation shifts glucose partitioning toward cell wall glucan synthesis at the expense of glycogen synthesis. Also phosphorylates the glycogen synthase GSY2 and the translation factors CAF20, TIF11 and SRO9. The polypeptide is Serine/threonine-protein kinase PSK2 (PSK2) (Saccharomyces cerevisiae (strain ATCC 204508 / S288c) (Baker's yeast)).